The sequence spans 457 residues: Flavin-containing monooxygenase FMO GS-OX2 (457 aa).

17–22 (GAGAAG) is a binding site for FAD. 211–216 (GNFASG) is an NADP(+) binding site.

The protein belongs to the FMO family.

The catalysed reaction is a (Z)-omega-(methylsulfanyl)-N-sulfo-alkylhydroximate S-glucoside + NADPH + O2 + H(+) = a (Z)-omega-(methylsulfinyl)-alkyl-glucosinolate + NADP(+) + H2O. Its function is as follows. Catalyzes the conversion of methylthioalkyl glucosinolates of any chain length into methylsulfinylalkyl glucosinolates. This Arabidopsis thaliana (Mouse-ear cress) protein is Flavin-containing monooxygenase FMO GS-OX2 (FMOGS-OX2).